Reading from the N-terminus, the 294-residue chain is Diaminopimelate epimerase (294 aa).

Asn-11 and Asn-78 together coordinate substrate. Residue Cys-87 is the Proton donor of the active site. Residues 88–89 (GN), Asn-167, Asn-203, and 221–222 (ER) each bind substrate. Cys-230 functions as the Proton acceptor in the catalytic mechanism. Position 231–232 (231–232 (GT)) interacts with substrate.

The protein belongs to the diaminopimelate epimerase family. In terms of assembly, homodimer.

Its subcellular location is the cytoplasm. It carries out the reaction (2S,6S)-2,6-diaminopimelate = meso-2,6-diaminopimelate. It functions in the pathway amino-acid biosynthesis; L-lysine biosynthesis via DAP pathway; DL-2,6-diaminopimelate from LL-2,6-diaminopimelate: step 1/1. Functionally, catalyzes the stereoinversion of LL-2,6-diaminopimelate (L,L-DAP) to meso-diaminopimelate (meso-DAP), a precursor of L-lysine and an essential component of the bacterial peptidoglycan. The polypeptide is Diaminopimelate epimerase (Mycobacterium avium (strain 104)).